The sequence spans 123 residues: Small ribosomal subunit protein uS12 (123 aa).

The segment at 1–21 (MPTIEQLVRKGRQAKPKKSKT) is disordered. A compositionally biased stretch (basic residues) spans 9–20 (RKGRQAKPKKSK).

The protein belongs to the universal ribosomal protein uS12 family. In terms of assembly, part of the 30S ribosomal subunit. Contacts proteins S8 and S17. May interact with IF1 in the 30S initiation complex.

In terms of biological role, with S4 and S5 plays an important role in translational accuracy. Functionally, interacts with and stabilizes bases of the 16S rRNA that are involved in tRNA selection in the A site and with the mRNA backbone. Located at the interface of the 30S and 50S subunits, it traverses the body of the 30S subunit contacting proteins on the other side and probably holding the rRNA structure together. The combined cluster of proteins S8, S12 and S17 appears to hold together the shoulder and platform of the 30S subunit. The sequence is that of Small ribosomal subunit protein uS12 from Bifidobacterium longum (strain NCC 2705).